The sequence spans 335 residues: MATNVVLDFERPVVELEAKLNEMRECLRSSSREQAPVESDALSKEIETLEKKVDALRRSIYKNLTRWQKVQLARHPERPYTLDYIYMMTCDFVELAGDRHFSDDKAIVGGFARLEDRASGYSQPVMVIGHQKGRDTKSNLYRNFGMAQPEGYRKALRLMKLAEKFRKPVITLIDTPGAFPGIEAEERGQAEAIARNLYEMAKLTVPVIVVIIGEGASGGAIGLGVGDRILMAENSWYSVISPESCSSILWRSWNYKEQAAEALQLTAEDLLKQGIIDRIIPEPMGGAHTDPEAMASTLKGMLIEELKALMPVPEKELVNNRIEKFSAMGVWNDEG.

The region spanning 48–308 is the CoA carboxyltransferase C-terminal domain; sequence TLEKKVDALR…KGMLIEELKA (261 aa).

The protein belongs to the AccA family. In terms of assembly, acetyl-CoA carboxylase is a heterohexamer composed of biotin carboxyl carrier protein (AccB), biotin carboxylase (AccC) and two subunits each of ACCase subunit alpha (AccA) and ACCase subunit beta (AccD).

It is found in the cytoplasm. The catalysed reaction is N(6)-carboxybiotinyl-L-lysyl-[protein] + acetyl-CoA = N(6)-biotinyl-L-lysyl-[protein] + malonyl-CoA. It functions in the pathway lipid metabolism; malonyl-CoA biosynthesis; malonyl-CoA from acetyl-CoA: step 1/1. Its function is as follows. Component of the acetyl coenzyme A carboxylase (ACC) complex. First, biotin carboxylase catalyzes the carboxylation of biotin on its carrier protein (BCCP) and then the CO(2) group is transferred by the carboxyltransferase to acetyl-CoA to form malonyl-CoA. The sequence is that of Acetyl-coenzyme A carboxylase carboxyl transferase subunit alpha from Chlorobium luteolum (strain DSM 273 / BCRC 81028 / 2530) (Pelodictyon luteolum).